Consider the following 353-residue polypeptide: Protein O-mannose kinase (353 aa).

The Cytoplasmic portion of the chain corresponds to 1 to 19 (MEKKAHFVKRDFPPREAPS). Residues 20–40 (LLLLLLVVAVLLLNALLYLYL) form a helical; Signal-anchor for type II membrane protein membrane-spanning segment. Residues 41 to 353 (GNLHGSSGRA…AAMPSTREML (313 aa)) are Lumenal-facing. Residues 83 to 353 (VRKLKCVGEG…AAMPSTREML (271 aa)) form the Protein kinase domain. N-linked (GlcNAc...) asparagine glycans are attached at residues Asn163 and Asn237.

Belongs to the protein kinase superfamily. Ser/Thr protein kinase family. STKL subfamily.

It is found in the endoplasmic reticulum membrane. It catalyses the reaction 3-O-[beta-D-GalNAc-(1-&gt;3)-beta-D-GlcNAc-(1-&gt;4)-alpha-D-Man]-L-Thr-[protein] + ATP = 3-O-[beta-D-GalNAc-(1-&gt;3)-beta-D-GlcNAc-(1-&gt;4)-(O-6-P-alpha-D-Man)]-Thr-[protein] + ADP + H(+). Functionally, protein O-mannose kinase that specifically mediates phosphorylation at the 6-position of an O-mannose of the trisaccharide (N-acetylgalactosamine (GalNAc)-beta-1,3-N-acetylglucosamine (GlcNAc)-beta-1,4-mannose) to generate phosphorylated O-mannosyl trisaccharide (N-acetylgalactosamine-beta-1,3-N-acetylglucosamine-beta-1,4-(phosphate-6-)mannose). Phosphorylated O-mannosyl trisaccharide is a carbohydrate structure present in alpha-dystroglycan (DAG1), which is required for binding laminin G-like domain-containing extracellular proteins with high affinity. Only shows kinase activity when the GalNAc-beta-3-GlcNAc-beta-terminus is linked to the 4-position of O-mannose, suggesting that this disaccharide serves as the substrate recognition motif. In Gallus gallus (Chicken), this protein is Protein O-mannose kinase (POMK).